The sequence spans 428 residues: Elongation factor 1-alpha (428 aa).

A tr-type G domain is found at 5 to 217 (KPHVNIVFIG…DQIPEPEKPI (213 aa)). The G1 stretch occupies residues 14–21 (GHVDHGKS). 14–21 (GHVDHGKS) is a binding site for GTP. Ser-21 is a Mg(2+) binding site. The tract at residues 68 to 72 (GITID) is G2. Residues 89–92 (DAPG) are G3. Residues 89–93 (DAPGH) and 144–147 (NKMD) each bind GTP. The tract at residues 144-147 (NKMD) is G4. A G5 region spans residues 181-183 (SAW).

Belongs to the TRAFAC class translation factor GTPase superfamily. Classic translation factor GTPase family. EF-Tu/EF-1A subfamily.

The protein localises to the cytoplasm. It catalyses the reaction GTP + H2O = GDP + phosphate + H(+). GTP hydrolase that promotes the GTP-dependent binding of aminoacyl-tRNA to the A-site of ribosomes during protein biosynthesis. This Pyrococcus horikoshii (strain ATCC 700860 / DSM 12428 / JCM 9974 / NBRC 100139 / OT-3) protein is Elongation factor 1-alpha.